The sequence spans 382 residues: tRNA(Met) cytidine acetate ligase (382 aa).

Residues 9-22 (VTEYNPFHNGHAYQ), glycine 103, asparagine 152, and arginine 177 contribute to the ATP site.

Belongs to the TmcAL family.

The protein resides in the cytoplasm. It catalyses the reaction cytidine(34) in elongator tRNA(Met) + acetate + ATP = N(4)-acetylcytidine(34) in elongator tRNA(Met) + AMP + diphosphate. Catalyzes the formation of N(4)-acetylcytidine (ac(4)C) at the wobble position of elongator tRNA(Met), using acetate and ATP as substrates. First activates an acetate ion to form acetyladenylate (Ac-AMP) and then transfers the acetyl group to tRNA to form ac(4)C34. The polypeptide is tRNA(Met) cytidine acetate ligase (Levilactobacillus brevis (strain ATCC 367 / BCRC 12310 / CIP 105137 / JCM 1170 / LMG 11437 / NCIMB 947 / NCTC 947) (Lactobacillus brevis)).